The primary structure comprises 289 residues: 33 kDa chaperonin (289 aa).

2 disulfides stabilise this stretch: Cys230/Cys232 and Cys263/Cys266.

The protein belongs to the HSP33 family. Post-translationally, under oxidizing conditions two disulfide bonds are formed involving the reactive cysteines. Under reducing conditions zinc is bound to the reactive cysteines and the protein is inactive.

The protein localises to the cytoplasm. Its function is as follows. Redox regulated molecular chaperone. Protects both thermally unfolding and oxidatively damaged proteins from irreversible aggregation. Plays an important role in the bacterial defense system toward oxidative stress. This is 33 kDa chaperonin from Shigella flexneri serotype 5b (strain 8401).